Here is a 136-residue protein sequence, read N- to C-terminus: Small ribosomal subunit protein uS19 (136 aa).

The disordered stretch occupies residues 117–136 (VQHGDPGMGATRSSMFVPLK).

This sequence belongs to the universal ribosomal protein uS19 family.

In terms of biological role, protein S19 forms a complex with S13 that binds strongly to the 16S ribosomal RNA. The protein is Small ribosomal subunit protein uS19 of Methanobrevibacter smithii (strain ATCC 35061 / DSM 861 / OCM 144 / PS).